The sequence spans 232 residues: MIGLIGKKLGMMRVFLNDGTAIPVTAIKVEPNYVVYIKSSETDGYNAIQVGSIPLKQSRFKKPMVGHFKKANLTPLKYLKEFRVDDVSSFALGQELGVDIFSPGELVDIVGRSKGRGFTGTMKRWDFGGFPKSHGHRYHRAVGSVGNRTDPGRVWKSKRMAGRHGNETIRVQALVVVDVLKDKGIILVNGSVPGHKDGIVYIEKSHIAFRKKAQRKQDRLSFIPSNLLRQEV.

The protein belongs to the universal ribosomal protein uL3 family. Part of the 50S ribosomal subunit. Forms a cluster with proteins L14 and L19.

Functionally, one of the primary rRNA binding proteins, it binds directly near the 3'-end of the 23S rRNA, where it nucleates assembly of the 50S subunit. The polypeptide is Large ribosomal subunit protein uL3 (Hydrogenobaculum sp. (strain Y04AAS1)).